Reading from the N-terminus, the 188-residue chain is MTIKSDKWIKKMSQEHNMIEPFEAGQVKVINNQKIVSYGTSSYGYDVRCADEFKIFTNINSSIVDPKNFNDKNFVDFKGDVCIIPPNSFALARTVEKFKIPRDTLVVCLGKSTYARCGIIVNVTPLEPEWEGYVTLEFSNTTPLPAKIYANEGVAQMLFFQSDEECETSYADKGGKYQGQVGVTLPKC.

DCTP is bound by residues 111 to 116 (KSTYAR), 135 to 137 (TLE), Q156, Y170, and Q180. The active-site Proton donor/acceptor is E137.

It belongs to the dCTP deaminase family. Homotrimer.

The catalysed reaction is dCTP + H2O + H(+) = dUTP + NH4(+). It participates in pyrimidine metabolism; dUMP biosynthesis; dUMP from dCTP (dUTP route): step 1/2. Functionally, catalyzes the deamination of dCTP to dUTP. This Francisella tularensis subsp. tularensis (strain FSC 198) protein is dCTP deaminase.